A 177-amino-acid chain; its full sequence is MENMGTRVIEPLIMGRVVGDVLDFFTPTTKMNVSYNKKQVSNGHELFPSSVSSKPRVEIHGGDLRSFFTLVMIDPDVPGPSDPFLKEHLHWIVTNIPGTTDATFGKEVVSYELPRPSIGIHRFVFVLFRQKQRRVIFPNIPSRDHFNTRKFAVEYDLGLPVAAVFFNAQRETAARKR.

The protein belongs to the phosphatidylethanolamine-binding protein family. In terms of tissue distribution, expressed below the apical dome of inflorescence and coflorescence meristems, and in inflorescence stem.

Its subcellular location is the cytoplasm. Its function is as follows. Controls inflorescence meristem identity and is required for maintenance of an indeterminate inflorescence. Prevents the expression of 'APETALA1' and 'LEAFY'. Also plays a role in the regulation of the time of flowering in the long-day flowering pathway. May form complexes with phosphorylated ligands by interfering with kinases and their effectors. This Arabidopsis thaliana (Mouse-ear cress) protein is Protein TERMINAL FLOWER 1 (TFL1).